The chain runs to 523 residues: Carboxypeptidase Y (523 aa).

Residues 1–20 (MILHTYIILSLLTIFPKAIG) form the signal peptide. A propeptide spanning residues 21–107 (LSLQMPMALE…QELPNYRLRV (87 aa)) is cleaved from the precursor. Intrachain disulfides connect C162-C401, C296-C310, C320-C343, C327-C336, and C365-C371. Residue N193 is glycosylated (N-linked (GlcNAc...) asparagine). The active site involves S249. N271 carries N-linked (GlcNAc...) asparagine glycosylation. D441 is an active-site residue. N484 and N487 each carry an N-linked (GlcNAc...) asparagine glycan. The active site involves H498.

This sequence belongs to the peptidase S10 family.

The protein localises to the vacuole. It carries out the reaction Release of a C-terminal amino acid with broad specificity.. Its function is as follows. Involved in degradation of small peptides. In Komagataella phaffii (strain GS115 / ATCC 20864) (Yeast), this protein is Carboxypeptidase Y (PRC1).